The sequence spans 495 residues: UDP-glycosyltransferase 73E1 (495 aa).

UDP-alpha-D-glucose contacts are provided by residues Ser-299, 355–356 (WA), 373–381 (HCGWNSTIE), and 395–398 (FADQ).

The protein belongs to the UDP-glycosyltransferase family.

Its function is as follows. May glycosylate diterpenes or flavonols in leaves. This chain is UDP-glycosyltransferase 73E1, found in Stevia rebaudiana (Stevia).